We begin with the raw amino-acid sequence, 263 residues long: Putative aliphatic sulfonates transport permease protein SsuC (263 aa).

Over 1–13 (MATPVKKWLLRVA) the chain is Cytoplasmic. The chain crosses the membrane as a helical span at residues 14 to 34 (PWFLPVGIVAVWQLASSVGWL). Topologically, residues 35-43 (STRILPSPE) are periplasmic. The helical transmembrane segment at 44–64 (GVVTAFWTLSASGELWQHLAI) threads the bilayer. In terms of domain architecture, ABC transmembrane type-1 spans 58-242 (LWQHLAISSW…LLGKLADVSA (185 aa)). Over 65-68 (SSWR) the chain is Cytoplasmic. A helical transmembrane segment spans residues 69–89 (ALIGFSIGGSLGLILGLISGL). Over 90–102 (SRWGERLLDTSIQ) the chain is Periplasmic. The helical transmembrane segment at 103–122 (MLRNVPHLALIPLVILWFGI) threads the bilayer. Over 123–125 (DES) the chain is Cytoplasmic. A helical transmembrane segment spans residues 126–148 (AKIFLVALGTLFPIYINTWHGIR). Residues 149–164 (NIDRGLVEMARSYGLS) lie on the Periplasmic side of the membrane. A helical transmembrane segment spans residues 165–185 (GIPLFIHVILPGALPSIMVGV). The Cytoplasmic portion of the chain corresponds to 186 to 187 (RF). A helical transmembrane segment spans residues 188 to 208 (ALGLMWLTLIVAETISANSGI). At 209–217 (GYLAMNARE) the chain is on the periplasmic side. The helical transmembrane segment at 218-238 (FLQTDVVVVAIILYALLGKLA) threads the bilayer. Residues 239 to 263 (DVSAQLLERLWLRWNPAYHLKEATV) are Cytoplasmic-facing.

Belongs to the binding-protein-dependent transport system permease family. CysTW subfamily.

The protein resides in the cell inner membrane. Functionally, part of a binding-protein-dependent transport system for aliphatic sulfonates. Probably responsible for the translocation of the substrate across the membrane. This Escherichia coli (strain K12) protein is Putative aliphatic sulfonates transport permease protein SsuC (ssuC).